Consider the following 1479-residue polypeptide: DNA-directed RNA polymerase subunit beta'' (1479 aa).

Positions 220, 296, 303, and 306 each coordinate Zn(2+). Disordered regions lie at residues 618-640 (TRAE…REDE) and 663-756 (LEDE…KKEG). Acidic residues-rich tracts occupy residues 622 to 631 (DSEEEYETLE), 704 to 717 (DEYG…EDEY), and 731 to 749 (LEED…PEED).

The protein belongs to the RNA polymerase beta' chain family. RpoC2 subfamily. As to quaternary structure, in plastids the minimal PEP RNA polymerase catalytic core is composed of four subunits: alpha, beta, beta', and beta''. When a (nuclear-encoded) sigma factor is associated with the core the holoenzyme is formed, which can initiate transcription. Zn(2+) is required as a cofactor.

The protein resides in the plastid. Its subcellular location is the chloroplast. The enzyme catalyses RNA(n) + a ribonucleoside 5'-triphosphate = RNA(n+1) + diphosphate. Functionally, DNA-dependent RNA polymerase catalyzes the transcription of DNA into RNA using the four ribonucleoside triphosphates as substrates. The protein is DNA-directed RNA polymerase subunit beta'' of Triticum aestivum (Wheat).